The following is a 427-amino-acid chain: Histidine--tRNA ligase (427 aa).

The protein belongs to the class-II aminoacyl-tRNA synthetase family. In terms of assembly, homodimer.

The protein localises to the cytoplasm. The catalysed reaction is tRNA(His) + L-histidine + ATP = L-histidyl-tRNA(His) + AMP + diphosphate + H(+). The polypeptide is Histidine--tRNA ligase (Proteus mirabilis (strain HI4320)).